The primary structure comprises 281 residues: DegV domain-containing protein (281 aa).

One can recognise a DegV domain in the interval 3 to 280 (WKIVSDSGCD…EGGLLMGYEI (278 aa)). Ser-63 and Ser-91 together coordinate hexadecanoate.

May bind long-chain fatty acids, such as palmitate, and may play a role in lipid transport or fatty acid metabolism. The chain is DegV domain-containing protein from Streptococcus gordonii.